The following is a 138-amino-acid chain: ATP synthase epsilon chain (138 aa).

This sequence belongs to the ATPase epsilon chain family. In terms of assembly, F-type ATPases have 2 components, CF(1) - the catalytic core - and CF(0) - the membrane proton channel. CF(1) has five subunits: alpha(3), beta(3), gamma(1), delta(1), epsilon(1). CF(0) has three main subunits: a, b and c.

The protein resides in the cell inner membrane. Produces ATP from ADP in the presence of a proton gradient across the membrane. The polypeptide is ATP synthase epsilon chain (Cupriavidus metallidurans (strain ATCC 43123 / DSM 2839 / NBRC 102507 / CH34) (Ralstonia metallidurans)).